We begin with the raw amino-acid sequence, 360 residues long: Peptide chain release factor 1 (360 aa).

An N5-methylglutamine modification is found at Gln-234.

Belongs to the prokaryotic/mitochondrial release factor family. In terms of processing, methylated by PrmC. Methylation increases the termination efficiency of RF1.

The protein localises to the cytoplasm. Its function is as follows. Peptide chain release factor 1 directs the termination of translation in response to the peptide chain termination codons UAG and UAA. The polypeptide is Peptide chain release factor 1 (Clostridium perfringens (strain 13 / Type A)).